Reading from the N-terminus, the 139-residue chain is MASQFELRIVSAEKQIFNGQVVSVRVSGVEGELGIYAGHTPLLTAIKPGMVKYTLEDNKEEFIYVSGGFLEVQPTIVTVLADIAIRGEELDQQRIIAAKRKAEDTLSKTNNAELSAKLAREIAKLRVYEIVNSKLTKKR.

This sequence belongs to the ATPase epsilon chain family. F-type ATPases have 2 components, CF(1) - the catalytic core - and CF(0) - the membrane proton channel. CF(1) has five subunits: alpha(3), beta(3), gamma(1), delta(1), epsilon(1). CF(0) has three main subunits: a, b and c.

Its subcellular location is the cell inner membrane. Produces ATP from ADP in the presence of a proton gradient across the membrane. The protein is ATP synthase epsilon chain of Haemophilus ducreyi (strain 35000HP / ATCC 700724).